We begin with the raw amino-acid sequence, 1215 residues long: von Willebrand factor A domain-containing protein 5B1 (1215 aa).

The signal sequence occupies residues 1–18 (MPGLLNCLTGAALPLMES). The region spanning 19 to 141 (DVTSYVSGYA…NVTVFISTSS (123 aa)) is the VIT domain. N-linked (GlcNAc...) asparagine glycosylation is present at Asn132. A VWFA domain is found at 353–532 (EFIFLIDRSN…KAMAPVLSDV (180 aa)). Positions 595-674 (SVFYPSQDEG…DPTGTARRYP (80 aa)) are disordered. Polar residues-rich tracts occupy residues 608–621 (GSGN…QGQT) and 646–667 (YSTN…SDPT). Position 879 is a phosphotyrosine (Tyr879). Disordered regions lie at residues 934–953 (GSSA…SSAA), 964–999 (QDSP…APSS), and 1100–1121 (SPQD…SLKS). 3 stretches are compositionally biased toward polar residues: residues 964–975 (QDSPTSTFNKTP), 990–999 (QNLSASAPSS), and 1100–1112 (SPQD…SSPP).

The protein resides in the secreted. The polypeptide is von Willebrand factor A domain-containing protein 5B1 (Vwa5b1) (Mus musculus (Mouse)).